The sequence spans 200 residues: Octanoyltransferase (200 aa).

Positions 27–200 (GAEDDQLWLV…WAELFSARWR (174 aa)) constitute a BPL/LPL catalytic domain. Substrate contacts are provided by residues 66 to 73 (RGGQITYH), 134 to 136 (SLG), and 147 to 149 (GIA). C165 acts as the Acyl-thioester intermediate in catalysis.

It belongs to the LipB family.

It localises to the cytoplasm. The enzyme catalyses octanoyl-[ACP] + L-lysyl-[protein] = N(6)-octanoyl-L-lysyl-[protein] + holo-[ACP] + H(+). It participates in protein modification; protein lipoylation via endogenous pathway; protein N(6)-(lipoyl)lysine from octanoyl-[acyl-carrier-protein]: step 1/2. In terms of biological role, catalyzes the transfer of endogenously produced octanoic acid from octanoyl-acyl-carrier-protein onto the lipoyl domains of lipoate-dependent enzymes. Lipoyl-ACP can also act as a substrate although octanoyl-ACP is likely to be the physiological substrate. In Dichelobacter nodosus (strain VCS1703A), this protein is Octanoyltransferase.